The chain runs to 502 residues: ATP synthase subunit alpha (502 aa).

ATP is bound at residue 169-176 (GDRATGKT).

This sequence belongs to the ATPase alpha/beta chains family. In terms of assembly, F-type ATPases have 2 components, CF(1) - the catalytic core - and CF(0) - the membrane proton channel. CF(1) has five subunits: alpha(3), beta(3), gamma(1), delta(1), epsilon(1). CF(0) has three main subunits: a(1), b(2) and c(9-12). The alpha and beta chains form an alternating ring which encloses part of the gamma chain. CF(1) is attached to CF(0) by a central stalk formed by the gamma and epsilon chains, while a peripheral stalk is formed by the delta and b chains.

The protein localises to the cell inner membrane. The enzyme catalyses ATP + H2O + 4 H(+)(in) = ADP + phosphate + 5 H(+)(out). Its function is as follows. Produces ATP from ADP in the presence of a proton gradient across the membrane. The alpha chain is a regulatory subunit. The polypeptide is ATP synthase subunit alpha (Hydrogenobaculum sp. (strain Y04AAS1)).